A 637-amino-acid chain; its full sequence is 1-deoxy-D-xylulose-5-phosphate synthase (637 aa).

Thiamine diphosphate contacts are provided by residues H75 and 116-118; that span reads AHS. Residue D147 coordinates Mg(2+). Residues 148-149, N177, Y288, and E370 each bind thiamine diphosphate; that span reads GA. Residue N177 coordinates Mg(2+).

It belongs to the transketolase family. DXPS subfamily. Homodimer. Requires Mg(2+) as cofactor. Thiamine diphosphate serves as cofactor.

The enzyme catalyses D-glyceraldehyde 3-phosphate + pyruvate + H(+) = 1-deoxy-D-xylulose 5-phosphate + CO2. It functions in the pathway metabolic intermediate biosynthesis; 1-deoxy-D-xylulose 5-phosphate biosynthesis; 1-deoxy-D-xylulose 5-phosphate from D-glyceraldehyde 3-phosphate and pyruvate: step 1/1. Its function is as follows. Catalyzes the acyloin condensation reaction between C atoms 2 and 3 of pyruvate and glyceraldehyde 3-phosphate to yield 1-deoxy-D-xylulose-5-phosphate (DXP). This Cupriavidus metallidurans (strain ATCC 43123 / DSM 2839 / NBRC 102507 / CH34) (Ralstonia metallidurans) protein is 1-deoxy-D-xylulose-5-phosphate synthase.